Here is a 340-residue protein sequence, read N- to C-terminus: GTPase Obg (340 aa).

The region spanning 1-158 (MSFIDEAKVY…KWIILKLKII (158 aa)) is the Obg domain. The OBG-type G domain occupies 159-325 (SDVGIIGLPN…LSILIKHINK (167 aa)). GTP contacts are provided by residues 165-172 (GLPNAGKS), 190-194 (FTTLE), 211-214 (DIPG), 278-281 (NKCD), and 306-308 (SSI). 2 residues coordinate Mg(2+): S172 and T192.

This sequence belongs to the TRAFAC class OBG-HflX-like GTPase superfamily. OBG GTPase family. As to quaternary structure, monomer. Mg(2+) is required as a cofactor.

Its subcellular location is the cytoplasm. In terms of biological role, an essential GTPase which binds GTP, GDP and possibly (p)ppGpp with moderate affinity, with high nucleotide exchange rates and a fairly low GTP hydrolysis rate. Plays a role in control of the cell cycle, stress response, ribosome biogenesis and in those bacteria that undergo differentiation, in morphogenesis control. The sequence is that of GTPase Obg from Ehrlichia ruminantium (strain Gardel).